A 642-amino-acid polypeptide reads, in one-letter code: 1-deoxy-D-xylulose-5-phosphate synthase (642 aa).

Residues H79 and 120–122 (AHS) contribute to the thiamine diphosphate site. A Mg(2+)-binding site is contributed by D151. Residues 152 to 153 (GS), N180, Y290, and E372 contribute to the thiamine diphosphate site. Residue N180 participates in Mg(2+) binding.

Belongs to the transketolase family. DXPS subfamily. Homodimer. The cofactor is Mg(2+). It depends on thiamine diphosphate as a cofactor.

It carries out the reaction D-glyceraldehyde 3-phosphate + pyruvate + H(+) = 1-deoxy-D-xylulose 5-phosphate + CO2. The protein operates within metabolic intermediate biosynthesis; 1-deoxy-D-xylulose 5-phosphate biosynthesis; 1-deoxy-D-xylulose 5-phosphate from D-glyceraldehyde 3-phosphate and pyruvate: step 1/1. In terms of biological role, catalyzes the acyloin condensation reaction between C atoms 2 and 3 of pyruvate and glyceraldehyde 3-phosphate to yield 1-deoxy-D-xylulose-5-phosphate (DXP). This is 1-deoxy-D-xylulose-5-phosphate synthase from Beijerinckia indica subsp. indica (strain ATCC 9039 / DSM 1715 / NCIMB 8712).